A 318-amino-acid polypeptide reads, in one-letter code: uncharacterized protein (318 aa).

This is an uncharacterized protein from Ostreid herpesvirus 1 (isolate France) (OsHV-1).